Consider the following 207-residue polypeptide: Recombination protein RecR (207 aa).

The segment at 60–75 (CRHCHNISDSDVCTIC) adopts a C4-type zinc-finger fold. Residues 83–178 (STLCVVENIR…RVSVIARGIA (96 aa)) enclose the Toprim domain.

The protein belongs to the RecR family.

In terms of biological role, may play a role in DNA repair. It seems to be involved in an RecBC-independent recombinational process of DNA repair. It may act with RecF and RecO. This is Recombination protein RecR from Porphyromonas gingivalis (strain ATCC BAA-308 / W83).